The chain runs to 139 residues: Large ribosomal subunit protein uL14A (139 aa).

The protein belongs to the universal ribosomal protein uL14 family. As to quaternary structure, component of the large ribosomal subunit (LSU). Mature yeast ribosomes consist of a small (40S) and a large (60S) subunit. The 40S small subunit contains 1 molecule of ribosomal RNA (18S rRNA) and at least 33 different proteins. The large 60S subunit contains 3 rRNA molecules (25S, 5.8S and 5S rRNA) and at least 46 different proteins.

Its subcellular location is the cytoplasm. It localises to the nucleus. Functionally, component of the ribosome, a large ribonucleoprotein complex responsible for the synthesis of proteins in the cell. The small ribosomal subunit (SSU) binds messenger RNAs (mRNAs) and translates the encoded message by selecting cognate aminoacyl-transfer RNA (tRNA) molecules. The large subunit (LSU) contains the ribosomal catalytic site termed the peptidyl transferase center (PTC), which catalyzes the formation of peptide bonds, thereby polymerizing the amino acids delivered by tRNAs into a polypeptide chain. The nascent polypeptides leave the ribosome through a tunnel in the LSU and interact with protein factors that function in enzymatic processing, targeting, and the membrane insertion of nascent chains at the exit of the ribosomal tunnel. The chain is Large ribosomal subunit protein uL14A (rpl2301) from Schizosaccharomyces pombe (strain 972 / ATCC 24843) (Fission yeast).